The primary structure comprises 249 residues: 3-deoxy-manno-octulosonate cytidylyltransferase (249 aa).

Belongs to the KdsB family.

Its subcellular location is the cytoplasm. The catalysed reaction is 3-deoxy-alpha-D-manno-oct-2-ulosonate + CTP = CMP-3-deoxy-beta-D-manno-octulosonate + diphosphate. It functions in the pathway nucleotide-sugar biosynthesis; CMP-3-deoxy-D-manno-octulosonate biosynthesis; CMP-3-deoxy-D-manno-octulosonate from 3-deoxy-D-manno-octulosonate and CTP: step 1/1. It participates in bacterial outer membrane biogenesis; lipopolysaccharide biosynthesis. Its function is as follows. Activates KDO (a required 8-carbon sugar) for incorporation into bacterial lipopolysaccharide in Gram-negative bacteria. The polypeptide is 3-deoxy-manno-octulosonate cytidylyltransferase (Aliivibrio fischeri (strain ATCC 700601 / ES114) (Vibrio fischeri)).